Reading from the N-terminus, the 376-residue chain is Probable dual-specificity RNA methyltransferase RlmN (376 aa).

Residues 1–25 (MSDSERTSLPLVFDEPRGRKKPPRH) form a disordered region. Glutamate 113 (proton acceptor) is an active-site residue. The region spanning 119 to 362 (YPDRATMCVS…PTTVRDTRGR (244 aa)) is the Radical SAM core domain. The cysteines at positions 126 and 368 are disulfide-linked. [4Fe-4S] cluster contacts are provided by cysteine 133, cysteine 137, and cysteine 140. S-adenosyl-L-methionine contacts are provided by residues 188-189 (GE), serine 222, 245-247 (SLH), and asparagine 325. The active-site S-methylcysteine intermediate is the cysteine 368.

It belongs to the radical SAM superfamily. RlmN family. [4Fe-4S] cluster serves as cofactor.

It localises to the cytoplasm. It catalyses the reaction adenosine(2503) in 23S rRNA + 2 reduced [2Fe-2S]-[ferredoxin] + 2 S-adenosyl-L-methionine = 2-methyladenosine(2503) in 23S rRNA + 5'-deoxyadenosine + L-methionine + 2 oxidized [2Fe-2S]-[ferredoxin] + S-adenosyl-L-homocysteine. It carries out the reaction adenosine(37) in tRNA + 2 reduced [2Fe-2S]-[ferredoxin] + 2 S-adenosyl-L-methionine = 2-methyladenosine(37) in tRNA + 5'-deoxyadenosine + L-methionine + 2 oxidized [2Fe-2S]-[ferredoxin] + S-adenosyl-L-homocysteine. Its function is as follows. Specifically methylates position 2 of adenine 2503 in 23S rRNA and position 2 of adenine 37 in tRNAs. In Nocardioides sp. (strain ATCC BAA-499 / JS614), this protein is Probable dual-specificity RNA methyltransferase RlmN.